The chain runs to 228 residues: N-acetyltransferase family 8 member 3 (228 aa).

Helical transmembrane passes span 36-56 and 58-78; these read MLLLPGTLLILLGVPLTLFLA and GSWLLVLLSTLTLLVSLWLLA. One can recognise an N-acetyltransferase domain in the interval 61–217; that stretch reads LLVLLSTLTL…RNSPMICLKY (157 aa).

It belongs to the camello family.

The protein localises to the nucleus membrane. The protein resides in the cytoplasm. Its subcellular location is the perinuclear region. It carries out the reaction L-lysyl-[protein] + acetyl-CoA = N(6)-acetyl-L-lysyl-[protein] + CoA + H(+). Functionally, has histone acetyltransferase activity in vitro, with specificity for histone H4. This is N-acetyltransferase family 8 member 3 from Rattus norvegicus (Rat).